The primary structure comprises 108 residues: UPF0060 membrane protein KPK_2870 (108 aa).

4 helical membrane-spanning segments follow: residues 6–26 (LLFF…WLWL), 29–49 (GATP…VWLL), 61–81 (AAYG…VDGV), and 86–106 (YDWA…AGWG).

It belongs to the UPF0060 family.

It is found in the cell inner membrane. The protein is UPF0060 membrane protein KPK_2870 of Klebsiella pneumoniae (strain 342).